Consider the following 501-residue polypeptide: Glycerol kinase (501 aa).

Position 12 (T12) interacts with ADP. ATP-binding residues include T12, T13, and S14. Position 12 (T12) interacts with sn-glycerol 3-phosphate. R16 lines the ADP pocket. Sn-glycerol 3-phosphate is bound by residues R82, E83, Y135, and D244. Positions 82, 83, 135, 244, and 245 each coordinate glycerol. ADP is bound by residues T266, G309, G409, and N413. Residues T266, G309, and G409 each contribute to the ATP site.

This sequence belongs to the FGGY kinase family.

The catalysed reaction is glycerol + ATP = sn-glycerol 3-phosphate + ADP + H(+). It functions in the pathway polyol metabolism; glycerol degradation via glycerol kinase pathway; sn-glycerol 3-phosphate from glycerol: step 1/1. Its activity is regulated as follows. Inhibited by fructose 1,6-bisphosphate (FBP). Functionally, key enzyme in the regulation of glycerol uptake and metabolism. Catalyzes the phosphorylation of glycerol to yield sn-glycerol 3-phosphate. In Coxiella burnetii (strain RSA 331 / Henzerling II), this protein is Glycerol kinase.